The following is a 420-amino-acid chain: Tyrosine--tRNA ligase (420 aa).

Y36 lines the L-tyrosine pocket. A 'HIGH' region motif is present at residues 41-50 (PTADSLHIGH). The L-tyrosine site is built by Y170 and Q174. Positions 231 to 235 (KFGKS) match the 'KMSKS' region motif. An ATP-binding site is contributed by K234. The region spanning 353–420 (TNIVEVLIET…KKKYFMVNYQ (68 aa)) is the S4 RNA-binding domain.

Belongs to the class-I aminoacyl-tRNA synthetase family. TyrS type 1 subfamily. In terms of assembly, homodimer.

Its subcellular location is the cytoplasm. The catalysed reaction is tRNA(Tyr) + L-tyrosine + ATP = L-tyrosyl-tRNA(Tyr) + AMP + diphosphate + H(+). Catalyzes the attachment of tyrosine to tRNA(Tyr) in a two-step reaction: tyrosine is first activated by ATP to form Tyr-AMP and then transferred to the acceptor end of tRNA(Tyr). This chain is Tyrosine--tRNA ligase, found in Staphylococcus aureus (strain COL).